The following is a 279-amino-acid chain: Phosphatidylglycerol--prolipoprotein diacylglyceryl transferase (279 aa).

Transmembrane regions (helical) follow at residues W25–V45, Y60–Y80, F103–I123, L133–I153, P181–Y201, G209–L229, and I236–L256. R152 is a binding site for a 1,2-diacyl-sn-glycero-3-phospho-(1'-sn-glycerol).

It belongs to the Lgt family.

The protein localises to the cell inner membrane. It catalyses the reaction L-cysteinyl-[prolipoprotein] + a 1,2-diacyl-sn-glycero-3-phospho-(1'-sn-glycerol) = an S-1,2-diacyl-sn-glyceryl-L-cysteinyl-[prolipoprotein] + sn-glycerol 1-phosphate + H(+). Its pathway is protein modification; lipoprotein biosynthesis (diacylglyceryl transfer). Functionally, catalyzes the transfer of the diacylglyceryl group from phosphatidylglycerol to the sulfhydryl group of the N-terminal cysteine of a prolipoprotein, the first step in the formation of mature lipoproteins. This is Phosphatidylglycerol--prolipoprotein diacylglyceryl transferase from Campylobacter hominis (strain ATCC BAA-381 / DSM 21671 / CCUG 45161 / LMG 19568 / NCTC 13146 / CH001A).